A 282-amino-acid chain; its full sequence is Pantothenate synthetase (282 aa).

30-37 is a binding site for ATP; the sequence is MGYLHEGH. Histidine 37 (proton donor) is an active-site residue. Position 61 (glutamine 61) interacts with (R)-pantoate. Glutamine 61 serves as a coordination point for beta-alanine. Residue 147–150 coordinates ATP; that stretch reads GQKD. Glutamine 153 is a (R)-pantoate binding site. Residues valine 176 and 184–187 contribute to the ATP site; that span reads MSSR.

Belongs to the pantothenate synthetase family. Homodimer.

The protein resides in the cytoplasm. The catalysed reaction is (R)-pantoate + beta-alanine + ATP = (R)-pantothenate + AMP + diphosphate + H(+). The protein operates within cofactor biosynthesis; (R)-pantothenate biosynthesis; (R)-pantothenate from (R)-pantoate and beta-alanine: step 1/1. Catalyzes the condensation of pantoate with beta-alanine in an ATP-dependent reaction via a pantoyl-adenylate intermediate. The chain is Pantothenate synthetase from Caldicellulosiruptor bescii (strain ATCC BAA-1888 / DSM 6725 / KCTC 15123 / Z-1320) (Anaerocellum thermophilum).